The following is a 356-amino-acid chain: Growth hormone-regulated TBC protein 1-A (356 aa).

Residues 1–29 (MEERDRTGRTGQPQHRINQPSTARERANS) form a disordered region. Residues 9–22 (RTGQPQHRINQPST) are compositionally biased toward polar residues. The region spanning 87–277 (GVPNEHRPLV…RIWDCLFYEG (191 aa)) is the Rab-GAP TBC domain.

Functionally, may act as a GTPase-activating protein for Rab family protein(s). This Danio rerio (Zebrafish) protein is Growth hormone-regulated TBC protein 1-A (grtp1a).